The primary structure comprises 330 residues: Probable cell division protein WhiA (330 aa).

A DNA-binding region (H-T-H motif) is located at residues 275 to 308; that stretch reads SLDELGRLSDPPLTKDAIAGRIRRLLAMADRRAE.

It belongs to the WhiA family.

Its function is as follows. Involved in cell division and chromosome segregation. The polypeptide is Probable cell division protein WhiA (Kocuria rhizophila (strain ATCC 9341 / DSM 348 / NBRC 103217 / DC2201)).